We begin with the raw amino-acid sequence, 64 residues long: MPKMKTDKGVAKRFKKTANGFKRKQAHLRHILTKKSTKRKRHLRAKCLVAKSDVPAIARQLPYA.

Belongs to the bacterial ribosomal protein bL35 family.

The polypeptide is Large ribosomal subunit protein bL35 (Shewanella frigidimarina (strain NCIMB 400)).